Reading from the N-terminus, the 385-residue chain is Galactokinase (385 aa).

34–37 (EHTD) is a substrate binding site. An ATP-binding site is contributed by 124-130 (SSGLSSS). Mg(2+)-binding residues include serine 130 and glutamate 162. The active-site Proton acceptor is the aspartate 174. Residue tyrosine 223 coordinates substrate.

The protein belongs to the GHMP kinase family. GalK subfamily.

The protein resides in the cytoplasm. It carries out the reaction alpha-D-galactose + ATP = alpha-D-galactose 1-phosphate + ADP + H(+). It functions in the pathway carbohydrate metabolism; galactose metabolism. In terms of biological role, catalyzes the transfer of the gamma-phosphate of ATP to D-galactose to form alpha-D-galactose-1-phosphate (Gal-1-P). This is Galactokinase from Mannheimia succiniciproducens (strain KCTC 0769BP / MBEL55E).